A 467-amino-acid polypeptide reads, in one-letter code: Tubulointerstitial nephritis antigen-like (467 aa).

The first 21 residues, 1–21 (MWGCPLGLLLLLLAGQAALEA), serve as a signal peptide directing secretion. An SMB domain is found at 49–96 (EQDMCCRGRADECALPYLGATCYCDLFCNRTVSDCCPDFWDFCLGIPP). 5 disulfides stabilise this stretch: Cys53–Cys72, Cys70–Cys72, Cys70–Cys84, Cys76–Cys83, and Cys84–Cys91. Asn77 carries an N-linked (GlcNAc...) asparagine glycan. Asn160 is a glycosylation site (N-linked (GlcNAc...) asparagine).

Belongs to the peptidase C1 family. Glycosylated.

The protein resides in the secreted. Its function is as follows. May be implicated in the adrenocortical zonation and in mechanisms for repressing the CYP11B1 gene expression in adrenocortical cells. This is a non catalytic peptidase C1 family protein. In Rattus norvegicus (Rat), this protein is Tubulointerstitial nephritis antigen-like (Tinagl1).